The chain runs to 125 residues: SOSS complex subunit C homolog A (125 aa).

The span at 1–16 shows a compositional bias: polar residues; that stretch reads MAFPNTSAQQAETNSK. 3 disordered regions span residues 1 to 20, 38 to 74, and 105 to 125; these read MAFP…SLEE, SNTN…AAFN, and PATP…NNPK.

The protein belongs to the SOSS-C family.

The protein is SOSS complex subunit C homolog A of Drosophila willistoni (Fruit fly).